Consider the following 154-residue polypeptide: Xanthine-guanine phosphoribosyltransferase (154 aa).

5-phospho-alpha-D-ribose 1-diphosphate is bound by residues 37–38 (RG) and 90–98 (DDLVDTGNT). Residue Asp-91 coordinates Mg(2+). Guanine is bound by residues Asp-94 and Ile-137. Asp-94 and Ile-137 together coordinate xanthine. Residues 94–98 (DTGNT) and 136–137 (WI) each bind GMP.

This sequence belongs to the purine/pyrimidine phosphoribosyltransferase family. XGPT subfamily. In terms of assembly, homotetramer. The cofactor is Mg(2+).

It is found in the cell inner membrane. It catalyses the reaction GMP + diphosphate = guanine + 5-phospho-alpha-D-ribose 1-diphosphate. It carries out the reaction XMP + diphosphate = xanthine + 5-phospho-alpha-D-ribose 1-diphosphate. The catalysed reaction is IMP + diphosphate = hypoxanthine + 5-phospho-alpha-D-ribose 1-diphosphate. The protein operates within purine metabolism; GMP biosynthesis via salvage pathway; GMP from guanine: step 1/1. Its pathway is purine metabolism; XMP biosynthesis via salvage pathway; XMP from xanthine: step 1/1. In terms of biological role, purine salvage pathway enzyme that catalyzes the transfer of the ribosyl-5-phosphate group from 5-phospho-alpha-D-ribose 1-diphosphate (PRPP) to the N9 position of the 6-oxopurines guanine and xanthine to form the corresponding ribonucleotides GMP (guanosine 5'-monophosphate) and XMP (xanthosine 5'-monophosphate), with the release of PPi. To a lesser extent, also acts on hypoxanthine. This Histophilus somni (strain 129Pt) (Haemophilus somnus) protein is Xanthine-guanine phosphoribosyltransferase.